A 61-amino-acid chain; its full sequence is Potassium channel toxin alpha-KTx 18.1 (61 aa).

The N-terminal stretch at 1-24 is a signal peptide; it reads MRFTGIILILISMTLIDSFFEMKV. 3 cysteine pairs are disulfide-bonded: cysteine 33–cysteine 52, cysteine 38–cysteine 57, and cysteine 42–cysteine 59.

Expressed by the venom gland.

The protein localises to the secreted. Its function is as follows. Reversible blocker of both Kv1.3/KCNA3 potassium channels (high affinity) and Shaker B (mammalian Kv1.1 analog) potassium channels (very low affinity). This chain is Potassium channel toxin alpha-KTx 18.1, found in Tityus obscurus (Amazonian scorpion).